A 346-amino-acid polypeptide reads, in one-letter code: Cytidine deaminase 5 (346 aa).

CMP/dCMP-type deaminase domains follow at residues 20-148 (TDHK…FGSE) and 183-304 (DLCS…ITGA). 58–60 (NVE) contacts substrate. A Zn(2+)-binding site is contributed by H71. E73 acts as the Proton donor in catalysis. Zn(2+)-binding residues include C104 and C107.

This sequence belongs to the cytidine and deoxycytidylate deaminase family. As to quaternary structure, homodimer. It depends on Zn(2+) as a cofactor.

It catalyses the reaction cytidine + H2O + H(+) = uridine + NH4(+). It carries out the reaction 2'-deoxycytidine + H2O + H(+) = 2'-deoxyuridine + NH4(+). Its function is as follows. This enzyme scavenges exogenous and endogenous cytidine and 2'-deoxycytidine for UMP synthesis. The polypeptide is Cytidine deaminase 5 (CDA5) (Arabidopsis thaliana (Mouse-ear cress)).